The primary structure comprises 203 residues: Arcadin-2 (203 aa).

As to quaternary structure, interacts with crenactin.

Its subcellular location is the cytoplasm. The protein localises to the cytoskeleton. Functionally, part of an actin-like archaeal cytoskeleton. Prevents polymerization of crenactin filaments by binding its C-terminus into crenactin's hydrophobic groove. May act by competing with the D-loop of the following crenactin subunit for the hydrophobic groove. The protein is Arcadin-2 of Pyrobaculum calidifontis (strain DSM 21063 / JCM 11548 / VA1).